Here is a 623-residue protein sequence, read N- to C-terminus: Replication protein A 70 kDa DNA-binding subunit (623 aa).

Met1 carries the N-acetylmethionine modification. Residues Lys22 and Lys88 each participate in a glycyl lysine isopeptide (Lys-Gly) (interchain with G-Cter in ubiquitin) cross-link. The disordered stretch occupies residues Val116 to Thr163. Over residues Gln124–Gln154 the composition is skewed to low complexity. N6-acetyllysine; alternate occurs at positions 172 and 176. Glycyl lysine isopeptide (Lys-Gly) (interchain with G-Cter in ubiquitin); alternate cross-links involve residues Lys172 and Lys176. A Phosphothreonine modification is found at Thr189. Residue Lys192 forms a Glycyl lysine isopeptide (Lys-Gly) (interchain with G-Cter in ubiquitin) linkage. Thr200 is subject to Phosphothreonine. The OB DNA-binding region spans Trp206–Asn290. Glycyl lysine isopeptide (Lys-Gly) (interchain with G-Cter in ubiquitin) cross-links involve residues Lys229 and Lys253. Lys268 is modified (N6-acetyllysine; alternate). Lys268 is covalently cross-linked (Glycyl lysine isopeptide (Lys-Gly) (interchain with G-Cter in ubiquitin); alternate). Residues Lys276 and Lys340 each participate in a glycyl lysine isopeptide (Lys-Gly) (interchain with G-Cter in ubiquitin) cross-link. The residue at position 393 (Ser393) is a Phosphoserine. Residue Lys419 forms a Glycyl lysine isopeptide (Lys-Gly) (interchain with G-Cter in ubiquitin) linkage. Lys458 participates in a covalent cross-link: Glycyl lysine isopeptide (Lys-Gly) (interchain with G-Cter in SUMO). Residue Lys467 forms a Glycyl lysine isopeptide (Lys-Gly) (interchain with G-Cter in ubiquitin) linkage. Residues Cys490 to Cys512 form a C4-type zinc finger. Residue Lys562 forms a Glycyl lysine isopeptide (Lys-Gly) (interchain with G-Cter in ubiquitin) linkage. Residue Lys586 forms a Glycyl lysine isopeptide (Lys-Gly) (interchain with G-Cter in SUMO) linkage.

The protein belongs to the replication factor A protein 1 family. Component of the canonical replication protein A complex (RPA), a heterotrimer composed of RPA1, RPA2 and RPA3. The DNA-binding activity may reside exclusively on the RPA1 subunit. Interacts with PRPF19; the PRP19-CDC5L complex is recruited to the sites of DNA repair where it ubiquitinates the replication protein A complex (RPA). Interacts with RIPK1. Interacts with the polymerase alpha subunit POLA1/p180; this interaction stabilizes the replicative complex and reduces the misincorporation rate of DNA polymerase alpha by acting as a fidelity clamp. Interacts with RAD51 and SENP6 to regulate DNA repair. Interacts with HELB; this interaction promotes HELB recruitment to chromatin following DNA damage. Interacts with PRIMPOL; leading to recruit PRIMPOL on chromatin and stimulate its DNA primase activity. Interacts with XPA; the interaction is direct and associates XPA with the RPA complex. Interacts with ETAA1; the interaction is direct and promotes ETAA1 recruitment at stalled replication forks. Interacts with RPA1; this interaction associates HROB with the RPA complex. Interacts (when poly-ADP-ribosylated) with HTATSF1. In terms of processing, DNA damage-induced 'Lys-63'-linked polyubiquitination by PRPF19 mediates ATRIP recruitment to the RPA complex at sites of DNA damage and activation of ATR. Ubiquitinated by RFWD3 at stalled replication forks in response to DNA damage: ubiquitination by RFWD3 does not lead to degradation by the proteasome and promotes removal of the RPA complex from stalled replication forks, promoting homologous recombination. Sumoylated on lysine residues Lys-458 and Lys-586, with Lys-458 being the major site. Sumoylation promotes recruitment of RAD51 to the DNA damage foci to initiate DNA repair through homologous recombination. Desumoylated by SENP6. Post-translationally, poly-ADP-ribosylated by PARP1; promoting recruitment of HTATSF1.

It localises to the nucleus. Its subcellular location is the PML body. In terms of biological role, as part of the heterotrimeric replication protein A complex (RPA/RP-A), binds and stabilizes single-stranded DNA intermediates, that form during DNA replication or upon DNA stress. It prevents their reannealing and in parallel, recruits and activates different proteins and complexes involved in DNA metabolism. Thereby, it plays an essential role both in DNA replication and the cellular response to DNA damage. In the cellular response to DNA damage, the RPA complex controls DNA repair and DNA damage checkpoint activation. Through recruitment of ATRIP activates the ATR kinase a master regulator of the DNA damage response. It is required for the recruitment of the DNA double-strand break repair factors RAD51 and RAD52 to chromatin in response to DNA damage. Also recruits to sites of DNA damage proteins like XPA and XPG that are involved in nucleotide excision repair and is required for this mechanism of DNA repair. Also plays a role in base excision repair (BER) probably through interaction with UNG. Also recruits SMARCAL1/HARP, which is involved in replication fork restart, to sites of DNA damage. May also play a role in telomere maintenance. The polypeptide is Replication protein A 70 kDa DNA-binding subunit (Rpa1) (Mus musculus (Mouse)).